The sequence spans 126 residues: Large ribosomal subunit protein uL22 (126 aa).

The protein belongs to the universal ribosomal protein uL22 family. Part of the 50S ribosomal subunit.

Its function is as follows. This protein binds specifically to 23S rRNA; its binding is stimulated by other ribosomal proteins, e.g. L4, L17, and L20. It is important during the early stages of 50S assembly. It makes multiple contacts with different domains of the 23S rRNA in the assembled 50S subunit and ribosome. Functionally, the globular domain of the protein is located near the polypeptide exit tunnel on the outside of the subunit, while an extended beta-hairpin is found that lines the wall of the exit tunnel in the center of the 70S ribosome. The protein is Large ribosomal subunit protein uL22 of Zymomonas mobilis subsp. mobilis (strain ATCC 31821 / ZM4 / CP4).